The sequence spans 94 residues: Large ribosomal subunit protein uL23 (94 aa).

This sequence belongs to the universal ribosomal protein uL23 family. Part of the 50S ribosomal subunit. Contacts protein L29, and trigger factor when it is bound to the ribosome.

Its function is as follows. One of the early assembly proteins it binds 23S rRNA. One of the proteins that surrounds the polypeptide exit tunnel on the outside of the ribosome. Forms the main docking site for trigger factor binding to the ribosome. This Treponema denticola (strain ATCC 35405 / DSM 14222 / CIP 103919 / JCM 8153 / KCTC 15104) protein is Large ribosomal subunit protein uL23.